The chain runs to 263 residues: 4-hydroxy-tetrahydrodipicolinate reductase (263 aa).

NAD(+)-binding positions include 7–12 (GFKGRM), 96–98 (GTT), and 122–125 (APNF). His152 (proton donor/acceptor) is an active-site residue. His153 is a (S)-2,3,4,5-tetrahydrodipicolinate binding site. Lys156 (proton donor) is an active-site residue. A (S)-2,3,4,5-tetrahydrodipicolinate-binding site is contributed by 162 to 163 (GT).

The protein belongs to the DapB family.

It localises to the cytoplasm. It carries out the reaction (S)-2,3,4,5-tetrahydrodipicolinate + NAD(+) + H2O = (2S,4S)-4-hydroxy-2,3,4,5-tetrahydrodipicolinate + NADH + H(+). It catalyses the reaction (S)-2,3,4,5-tetrahydrodipicolinate + NADP(+) + H2O = (2S,4S)-4-hydroxy-2,3,4,5-tetrahydrodipicolinate + NADPH + H(+). Its pathway is amino-acid biosynthesis; L-lysine biosynthesis via DAP pathway; (S)-tetrahydrodipicolinate from L-aspartate: step 4/4. Its function is as follows. Catalyzes the conversion of 4-hydroxy-tetrahydrodipicolinate (HTPA) to tetrahydrodipicolinate. The protein is 4-hydroxy-tetrahydrodipicolinate reductase of Listeria monocytogenes serotype 4b (strain CLIP80459).